Consider the following 287-residue polypeptide: ATP synthase gamma chain (287 aa).

This sequence belongs to the ATPase gamma chain family. As to quaternary structure, F-type ATPases have 2 components, CF(1) - the catalytic core - and CF(0) - the membrane proton channel. CF(1) has five subunits: alpha(3), beta(3), gamma(1), delta(1), epsilon(1). CF(0) has three main subunits: a, b and c.

It is found in the cell inner membrane. Functionally, produces ATP from ADP in the presence of a proton gradient across the membrane. The gamma chain is believed to be important in regulating ATPase activity and the flow of protons through the CF(0) complex. The polypeptide is ATP synthase gamma chain (Klebsiella pneumoniae subsp. pneumoniae (strain ATCC 700721 / MGH 78578)).